A 468-amino-acid chain; its full sequence is ATP synthase subunit beta 2 (468 aa).

155–162 (GGAGVGKT) lines the ATP pocket.

It belongs to the ATPase alpha/beta chains family. In terms of assembly, F-type ATPases have 2 components, CF(1) - the catalytic core - and CF(0) - the membrane proton channel. CF(1) has five subunits: alpha(3), beta(3), gamma(1), delta(1), epsilon(1). CF(0) has four main subunits: a(1), b(1), b'(1) and c(9-12).

The protein resides in the cell inner membrane. The enzyme catalyses ATP + H2O + 4 H(+)(in) = ADP + phosphate + 5 H(+)(out). Functionally, produces ATP from ADP in the presence of a proton gradient across the membrane. The catalytic sites are hosted primarily by the beta subunits. The protein is ATP synthase subunit beta 2 of Chlorobium luteolum (strain DSM 273 / BCRC 81028 / 2530) (Pelodictyon luteolum).